We begin with the raw amino-acid sequence, 381 residues long: Cytochrome b (381 aa).

A run of 4 helical transmembrane segments spans residues 34-54, 78-99, 114-134, and 179-199; these read FGSL…FLAM, WLIR…YLHI, WNIG…GYVL, and FFAF…LHFL. Heme b-binding residues include His84 and His98. Heme b is bound by residues His183 and His197. His202 contacts a ubiquinone. A run of 4 helical transmembrane segments spans residues 227 to 247, 289 to 309, 321 to 341, and 348 to 368; these read YKDI…VLFL, LGGV…PFLH, LTQL…WIGG, and FIFI…IITP.

It belongs to the cytochrome b family. The cytochrome bc1 complex contains 3 respiratory subunits (MT-CYB, CYC1 and UQCRFS1), 2 core proteins (UQCRC1 and UQCRC2) and probably 6 low-molecular weight proteins. It depends on heme b as a cofactor.

It is found in the mitochondrion inner membrane. Component of the ubiquinol-cytochrome c reductase complex (complex III or cytochrome b-c1 complex) that is part of the mitochondrial respiratory chain. The b-c1 complex mediates electron transfer from ubiquinol to cytochrome c. Contributes to the generation of a proton gradient across the mitochondrial membrane that is then used for ATP synthesis. This is Cytochrome b (mt-cyb) from Heterodontus francisci (Horn shark).